We begin with the raw amino-acid sequence, 169 residues long: Ribosome maturation factor RimM (169 aa).

One can recognise a PRC barrel domain in the interval 94 to 168 (DDEFYHADLI…RIVADPPEGL (75 aa)).

Belongs to the RimM family. Binds ribosomal protein uS19.

It localises to the cytoplasm. An accessory protein needed during the final step in the assembly of 30S ribosomal subunit, possibly for assembly of the head region. Essential for efficient processing of 16S rRNA. May be needed both before and after RbfA during the maturation of 16S rRNA. It has affinity for free ribosomal 30S subunits but not for 70S ribosomes. This is Ribosome maturation factor RimM from Cereibacter sphaeroides (strain ATCC 17023 / DSM 158 / JCM 6121 / CCUG 31486 / LMG 2827 / NBRC 12203 / NCIMB 8253 / ATH 2.4.1.) (Rhodobacter sphaeroides).